A 285-amino-acid chain; its full sequence is Bifunctional protein FolD (285 aa).

NADP(+) is bound by residues 165 to 167 (GRS) and serine 190.

The protein belongs to the tetrahydrofolate dehydrogenase/cyclohydrolase family. In terms of assembly, homodimer.

The catalysed reaction is (6R)-5,10-methylene-5,6,7,8-tetrahydrofolate + NADP(+) = (6R)-5,10-methenyltetrahydrofolate + NADPH. It catalyses the reaction (6R)-5,10-methenyltetrahydrofolate + H2O = (6R)-10-formyltetrahydrofolate + H(+). The protein operates within one-carbon metabolism; tetrahydrofolate interconversion. Functionally, catalyzes the oxidation of 5,10-methylenetetrahydrofolate to 5,10-methenyltetrahydrofolate and then the hydrolysis of 5,10-methenyltetrahydrofolate to 10-formyltetrahydrofolate. This Streptococcus pneumoniae serotype 4 (strain ATCC BAA-334 / TIGR4) protein is Bifunctional protein FolD.